Here is a 646-residue protein sequence, read N- to C-terminus: Epithelial sodium channel subunit beta-2 (646 aa).

The Cytoplasmic portion of the chain corresponds to Met-1–Met-57. Residues Trp-58 to Leu-78 traverse the membrane as a helical segment. Over Thr-79–Gly-551 the chain is Extracellular. Intrachain disulfides connect Cys-104/Cys-290, Cys-214/Cys-221, Cys-267/Cys-274, Cys-380/Cys-467, Cys-405/Cys-463, Cys-409/Cys-459, Cys-418/Cys-445, and Cys-420/Cys-434. The helical transmembrane segment at Ser-552 to Leu-572 threads the bilayer. At Lys-573–Asn-646 the chain is on the cytoplasmic side. The interval Gln-586–Asn-646 is disordered. Residues Gln-610–Glu-619 are compositionally biased toward basic and acidic residues.

This sequence belongs to the amiloride-sensitive sodium channel (TC 1.A.6) family. SCNN1B subfamily. In terms of assembly, component of the heterotrimeric epithelial sodium channel (ENaC) composed of an alpha/SCNN1A, a beta/SCNN1B and a gamma/SCNN1G subunit.

The protein resides in the apical cell membrane. The protein localises to the cytoplasmic vesicle membrane. It catalyses the reaction Na(+)(in) = Na(+)(out). With respect to regulation, originally identified and characterized by its inhibition by the diuretic drug amiloride. This is one of the three pore-forming subunits of the heterotrimeric epithelial sodium channel (ENaC), a critical regulator of sodium balance and fluid homeostasis. ENaC operates in epithelial tissues, where it mediates the electrodiffusion of sodium ions from extracellular fluid through the apical membrane of cells, with water following osmotically. The sequence is that of Epithelial sodium channel subunit beta-2 (scnn1b-b) from Xenopus laevis (African clawed frog).